The primary structure comprises 268 residues: Kynurenine formamidase (268 aa).

The short motif at His-33–Trp-37 is the HGGXW element. Residue Ser-107 is the Nucleophile of the active site. Residues Asp-219 and His-251 contribute to the active site.

This sequence belongs to the kynurenine formamidase family. As to quaternary structure, homodimer.

The catalysed reaction is N-formyl-L-kynurenine + H2O = L-kynurenine + formate + H(+). It participates in amino-acid degradation; L-tryptophan degradation via kynurenine pathway; L-kynurenine from L-tryptophan: step 2/2. Its function is as follows. Catalyzes the hydrolysis of N-formyl-L-kynurenine to L-kynurenine, the second step in the kynurenine pathway of tryptophan degradation. Kynurenine may be further oxidized to nicotinic acid, NAD(H) and NADP(H). Required for elimination of toxic metabolites. In Scheffersomyces stipitis (strain ATCC 58785 / CBS 6054 / NBRC 10063 / NRRL Y-11545) (Yeast), this protein is Kynurenine formamidase.